The sequence spans 139 residues: Stress-related protein 1 (139 aa).

A compositionally biased stretch (polar residues) spans 1-12; that stretch reads MTSESSTPTGST. Residues 1 to 86 are disordered; sequence MTSESSTPTG…AERPGSATTP (86 aa). Low complexity-rich tracts occupy residues 14–53 and 60–74; these read ALPA…SLVV and SPVV…TRPR. Serine 60 carries the phosphoserine modification.

In terms of tissue distribution, embryo.

Functionally, involved in drought, heat, cold, and/or salt tolerance. The polypeptide is Stress-related protein 1 (SRP1) (Zea mays (Maize)).